Here is a 1378-residue protein sequence, read N- to C-terminus: Roundabout homolog 2 (1378 aa).

The first 21 residues, 1-21 (MSLLMFTQLLLCGFLYVRVDG), serve as a signal peptide directing secretion. Residues 22–859 (SRLRQEDFPP…EQITDVVKQP (838 aa)) lie on the Extracellular side of the membrane. 5 consecutive Ig-like C2-type domains span residues 31–127 (PRIV…ASLE), 133–220 (DDFR…AELT), 225–309 (PTFL…ATLT), 314–409 (PQFV…LEVT), and 418–504 (PIIL…AVLD). The cysteines at positions 52 and 110 are disulfide-linked. N123 is a glycosylation site (N-linked (GlcNAc...) asparagine). 3 disulfide bridges follow: C154-C203, C246-C293, and C335-C391. A glycan (N-linked (GlcNAc...) asparagine) is linked at N426. Cysteines 439 and 488 form a disulfide. 3 consecutive Fibronectin type-III domains span residues 524-618 (PPSK…TQDI), 637-735 (VLVR…TEEA), and 739-836 (PPQS…IGRR). Residues 603–625 (LSDPSPMSDPVRTQDISPPAQGV) are disordered. N-linked (GlcNAc...) asparagine glycans are attached at residues N752, N782, N789, and N845. The helical transmembrane segment at 860–880 (AFIAGIGGACWVILMGFSIWL) threads the bilayer. Residues 881 to 1378 (YWRRKKRKGL…NSQGQFTGEL (498 aa)) are Cytoplasmic-facing. 3 disordered regions span residues 1032-1084 (GFGY…PLPG), 1124-1156 (EDDD…LTPS), and 1215-1348 (DVAD…KTEV). The segment covering 1058-1067 (SSKPQKNNGS) has biased composition (low complexity). The segment covering 1141-1155 (PAISFGQQSTATLTP) has biased composition (polar residues). Residue T1154 is modified to Phosphothreonine. S1156 bears the Phosphoserine mark. Over residues 1215–1228 (DVADDDADDEEEAL) the composition is skewed to acidic residues. The segment covering 1240–1285 (TPGSSMDNLDSSVTGKAFTSSQRPRPTSPFSTDSNTSAALSQSQRP) has biased composition (polar residues). Residues 1319 to 1343 (SKPSFPSPGGHSSSGTASSKGSTGP) are compositionally biased toward low complexity.

Belongs to the immunoglobulin superfamily. ROBO family. In terms of assembly, interacts with SLIT2.

Its subcellular location is the membrane. Its function is as follows. Receptor for SLIT2, and probably SLIT1, which are thought to act as molecular guidance cue in cellular migration, including axonal navigation at the ventral midline of the neural tube and projection of axons to different regions during neuronal development. The chain is Roundabout homolog 2 (ROBO2) from Homo sapiens (Human).